Here is a 417-residue protein sequence, read N- to C-terminus: MDYIKEWILPQDPEVAEAIAQEEQRQRYKIELIASENFVSRAVMAAQGSVLTNKYAEGYPGKRYYGGCEYVDIVEDLARERVKKLFGAEHANVQPHSGAQANTAVYFAMLKPGDTVLGMNLSHGGHLTHGSPVNISGMYYNFVAYGVDQVTERIDYDVVRQLALEHRPKLIVAGASAYPRQIDFARLREIADEADSYFMVDMAHIAGLVAAGLHQNPVPYAHFVTTTTHKTLRGPRGGLILCQEEFAKAIDKAIFPGIQGGPLMHVIAAKAVAFGEALKPEFVEYQKRIVENAKVLSETLAEKGFRIVSGGTDNHLMLVDVRSKGLTGKEAEYILDEVGITVNKNTIPYDPASPMVTSGIRIGTPAVTSRGMDTLAMKKIAAAIDIALSEPNEAGAAKARDMVAALCAEYPLYPNLD.

(6S)-5,6,7,8-tetrahydrofolate is bound by residues L121 and 125 to 127 (GHL). K230 bears the N6-(pyridoxal phosphate)lysine mark. A (6S)-5,6,7,8-tetrahydrofolate-binding site is contributed by E245.

It belongs to the SHMT family. As to quaternary structure, homodimer. Pyridoxal 5'-phosphate serves as cofactor.

It localises to the cytoplasm. The enzyme catalyses (6R)-5,10-methylene-5,6,7,8-tetrahydrofolate + glycine + H2O = (6S)-5,6,7,8-tetrahydrofolate + L-serine. It functions in the pathway one-carbon metabolism; tetrahydrofolate interconversion. Its pathway is amino-acid biosynthesis; glycine biosynthesis; glycine from L-serine: step 1/1. In terms of biological role, catalyzes the reversible interconversion of serine and glycine with tetrahydrofolate (THF) serving as the one-carbon carrier. This reaction serves as the major source of one-carbon groups required for the biosynthesis of purines, thymidylate, methionine, and other important biomolecules. Also exhibits THF-independent aldolase activity toward beta-hydroxyamino acids, producing glycine and aldehydes, via a retro-aldol mechanism. The chain is Serine hydroxymethyltransferase from Desulfitobacterium hafniense (strain DSM 10664 / DCB-2).